Here is a 451-residue protein sequence, read N- to C-terminus: uncharacterized protein (451 aa).

The disordered stretch occupies residues 1–451 (MSETENKTTT…KKEAAKNKSK (451 aa)). The segment covering 9–22 (TTETPTTTDSTVTT) has biased composition (low complexity). Polar residues predominate over residues 44–54 (VKNQLSNTRTR). A compositionally biased stretch (basic and acidic residues) spans 73–99 (KLIDTKERKEKKEKKEKEPKEPKEPKE). Residues 114 to 147 (GDEEEDEEKEEDEEQKEEQSQEEDSEESEEEQNS) show a composition bias toward acidic residues. Residues 152–162 (KKKKKQAKKVA) are compositionally biased toward basic residues. Basic and acidic residues-rich tracts occupy residues 163-192 (KKETEPKKKEAKPKKEAKPKKETTKKEKEA), 199-210 (STEKKEKEEKPK), and 217-230 (KKDQAAAEKKKDGD). Low complexity predominate over residues 232–244 (STTTTATATTTTD). Composition is skewed to basic and acidic residues over residues 284–303 (TEEKKDEEKSEEKEKKETKK) and 311–340 (AAAEKKKTAANPTDKKDGENKDVTPSDDKP). Over residues 341 to 355 (AATTTTTTAAAATTT) the composition is skewed to low complexity. A compositionally biased stretch (basic and acidic residues) spans 356 to 383 (EEPKEKITKPAADKKKAPANKKAEKDQS). The span at 393–425 (TTTATTTTTNKDATAPTTTTNKDATAPTTTTTK) shows a compositional bias: low complexity. The segment covering 441 to 451 (PKKEAAKNKSK) has biased composition (basic and acidic residues).

This is an uncharacterized protein from Dictyostelium discoideum (Social amoeba).